Reading from the N-terminus, the 349-residue chain is Deoxyguanosinetriphosphate triphosphohydrolase-like protein (349 aa).

The region spanning 80–197 is the HD domain; it reads RLTHTLEVAQ…VKYSDKIAYV (118 aa).

This sequence belongs to the dGTPase family. Type 2 subfamily.

In Clostridium tetani (strain Massachusetts / E88), this protein is Deoxyguanosinetriphosphate triphosphohydrolase-like protein.